The chain runs to 146 residues: Hemoglobin subunit beta (146 aa).

The residue at position 1 (Val1) is an N-acetylvaline. In terms of domain architecture, Globin spans 2-146 (HLSDGEKNAI…VANALAHKYH (145 aa)). Ser44 is modified (phosphoserine). Position 59 is an N6-acetyllysine (Lys59). Position 63 (His63) interacts with heme b. The residue at position 82 (Lys82) is an N6-acetyllysine. Residue His92 coordinates heme b. Position 93 is an S-nitrosocysteine (Cys93). At Lys144 the chain carries N6-acetyllysine.

The protein belongs to the globin family. As to quaternary structure, heterotetramer of two alpha chains and two beta chains. Red blood cells.

Involved in oxygen transport from the lung to the various peripheral tissues. The chain is Hemoglobin subunit beta (HBB) from Spermophilus citellus (European ground squirrel).